The primary structure comprises 207 residues: 3-demethoxyubiquinol 3-hydroxylase (207 aa).

Residues E56, E86, H89, E138, E170, and H173 each coordinate Fe cation.

The protein belongs to the COQ7 family. Fe cation is required as a cofactor.

It localises to the cell membrane. It carries out the reaction a 5-methoxy-2-methyl-3-(all-trans-polyprenyl)benzene-1,4-diol + AH2 + O2 = a 3-demethylubiquinol + A + H2O. It functions in the pathway cofactor biosynthesis; ubiquinone biosynthesis. Its function is as follows. Catalyzes the hydroxylation of 2-nonaprenyl-3-methyl-6-methoxy-1,4-benzoquinol during ubiquinone biosynthesis. This Dechloromonas aromatica (strain RCB) protein is 3-demethoxyubiquinol 3-hydroxylase.